A 138-amino-acid chain; its full sequence is Large ribosomal subunit protein uL16 (138 aa).

Basic residues predominate over residues 1–13; sequence MLQPKRRKYRKEQ. Positions 1-20 are disordered; that stretch reads MLQPKRRKYRKEQKGRNTGI.

Belongs to the universal ribosomal protein uL16 family. In terms of assembly, part of the 50S ribosomal subunit.

Its function is as follows. Binds 23S rRNA and is also seen to make contacts with the A and possibly P site tRNAs. This chain is Large ribosomal subunit protein uL16, found in Paraburkholderia phytofirmans (strain DSM 17436 / LMG 22146 / PsJN) (Burkholderia phytofirmans).